A 1220-amino-acid polypeptide reads, in one-letter code: Plasma membrane calcium-transporting ATPase 3 (1220 aa).

Over residues 1–20 the composition is skewed to polar residues; it reads MGDMANSSIEFHPKPQQQRD. A disordered region spans residues 1 to 23; sequence MGDMANSSIEFHPKPQQQRDVPQ. Over 1-97 the chain is Cytoplasmic; the sequence is MGDMANSSIE…NFIPPKQPKT (97 aa). At Ser8 the chain carries Phosphoserine. A helical transmembrane segment spans residues 98–118; the sequence is FLQLVWEALQDVTLIILEVAA. The Extracellular segment spans residues 119-155; that stretch reads IVSLGLSFYAPPGEESEACGNVSGGAEDEGEAEAGWI. A helical transmembrane segment spans residues 156 to 176; that stretch reads EGAAILLSVICVVLVTAFNDW. Over 177 to 364 the chain is Cytoplasmic; sequence SKEKQFRGLQ…KEKSVLQGKL (188 aa). The disordered stretch occupies residues 298 to 355; it reads EEEKKDKKGKQQDGAMESSQTKAKKQDGAVAMEMQPLKSAEGGEMEEREKKKANAPKK. Basic and acidic residues-rich tracts occupy residues 299 to 308 and 342 to 355; these read EEKKDKKGKQ and MEEREKKKANAPKK. Residues 365-384 traverse the membrane as a helical segment; the sequence is TKLAVQIGKAGLVMSAITVI. Topologically, residues 385 to 417 are extracellular; it reads ILVLYFVIETFVVEGRTWLAECTPVYVQYFVKF. The helical transmembrane segment at 418-435 threads the bilayer; the sequence is FIIGVTVLVVAVPEGLPL. The Cytoplasmic portion of the chain corresponds to 436–849; sequence AVTISLAYSV…MWGRNVYDSI (414 aa). Asp473 functions as the 4-aspartylphosphate intermediate in the catalytic mechanism. Positions 794 and 798 each coordinate Mg(2+). The chain crosses the membrane as a helical span at residues 850 to 869; it reads SKFLQFQLTVNVVAVIVAFT. The Extracellular segment spans residues 870–879; sequence GACITQDSPL. The helical transmembrane segment at 880-900 threads the bilayer; it reads KAVQMLWVNLIMDTFASLALA. The Cytoplasmic portion of the chain corresponds to 901–920; sequence TEPPTESLLLRKPYGRDKPL. Residues 921 to 943 form a helical membrane-spanning segment; it reads ISRTMMKNILGHAVYQLAIIFTL. Residues 944 to 961 are Extracellular-facing; sequence LFVGELFFDIDSGRNAPL. Residues 962 to 983 traverse the membrane as a helical segment; the sequence is HSPPSEHYTIIFNTFVMMQLFN. Residues 984-1002 are Cytoplasmic-facing; sequence EINARKIHGERNVFDGIFS. Residues 1003-1024 form a helical membrane-spanning segment; that stretch reads NPIFCTIVLGTFGIQIVIVQFG. The Extracellular portion of the chain corresponds to 1025–1034; sequence GKPFSCSPLS. A helical membrane pass occupies residues 1035-1056; it reads TEQWLWCLFVGVGELVWGQVIA. Residues 1057–1220 lie on the Cytoplasmic side of the membrane; it reads TIPTSQLKCL…SPLHSVETSL (164 aa). The residue at position 1079 (Thr1079) is a Phosphothreonine. Positions 1097–1114 are calmodulin-binding subdomain A; that stretch reads LRRGQILWFRGLNRIQTQ. Thr1113 is subject to Phosphothreonine; by PKC. The segment at 1115 to 1124 is calmodulin-binding subdomain B; it reads IRVVKAFRSS. A disordered region spans residues 1166 to 1186; the sequence is ENEERLRAPPPPSPNQNNNAI.

This sequence belongs to the cation transport ATPase (P-type) (TC 3.A.3) family. Type IIB subfamily. Interacts with PDZD11. Interacts (via N-terminus) with YWHAE. In terms of tissue distribution, highly expressed in the cerebellum. Expressed in adrenal glands.

The protein localises to the cell membrane. The protein resides in the presynaptic cell membrane. The catalysed reaction is Ca(2+)(in) + ATP + H2O = Ca(2+)(out) + ADP + phosphate + H(+). With respect to regulation, down-regulated by YWHAE. ATP-driven Ca(2+) ion pump involved in the maintenance of basal intracellular Ca(2+) levels at the presynaptic terminals. Uses ATP as an energy source to transport cytosolic Ca(2+) ions across the plasma membrane to the extracellular compartment. May counter-transport protons, but the mechanism and the stoichiometry of this Ca(2+)/H(+) exchange remains to be established. This Homo sapiens (Human) protein is Plasma membrane calcium-transporting ATPase 3.